We begin with the raw amino-acid sequence, 24 residues long: 29 kDa outer membrane protein (24 aa).

The protein resides in the cell outer membrane. Functionally, may be involved in transporting molecules across the outer membrane. This is 29 kDa outer membrane protein from Acinetobacter baumannii.